Here is a 962-residue protein sequence, read N- to C-terminus: Phagocyte signaling-impaired protein (962 aa).

TPR repeat units lie at residues 45 to 78 (LCARALKGLALLRLGRYEESHGCLQAVAEDKPTD), 79 to 112 (DSTLQVLSFCYREMEQLNKIVELYQHAVKKNPGN), and 523 to 560 (QIQLDSMGYVHCQLLPLCGRFSGARNSYDTTMKFFTNS). Residues 856 to 880 (TKVKKKQGDNKTQDTPQPVSEKERS) are disordered.

The protein belongs to the MDM20/NAA25 family. Component of the N-terminal acetyltransferase B (NatB) complex.

It localises to the lysosome. In terms of biological role, non-catalytic subunit of the NatB complex which catalyzes acetylation of the N-terminal methionine residues of proteins beginning with Met-Asp or Met-Glu. Has 2 roles in the larval immune response: required both for the phagocytic degradation of internalized bacteria and for the induction of Defensin in the fat body. Within the phagocytic blood cells, has a role in detection of infection and activation of the humoral immune response. The protein is Phagocyte signaling-impaired protein of Drosophila pseudoobscura pseudoobscura (Fruit fly).